A 942-amino-acid polypeptide reads, in one-letter code: UvrABC system protein A (942 aa).

Position 32 to 39 (Gly32 to Ser39) interacts with ATP. A C4-type zinc finger spans residues Cys251–Cys278. 2 ABC transporter domains span residues Trp308–Ile589 and Gly609–Lys937. Gly641 to Ser648 lines the ATP pocket. The C4-type zinc finger occupies Cys740 to Cys766.

The protein belongs to the ABC transporter superfamily. UvrA family. As to quaternary structure, forms a heterotetramer with UvrB during the search for lesions.

It is found in the cytoplasm. Functionally, the UvrABC repair system catalyzes the recognition and processing of DNA lesions. UvrA is an ATPase and a DNA-binding protein. A damage recognition complex composed of 2 UvrA and 2 UvrB subunits scans DNA for abnormalities. When the presence of a lesion has been verified by UvrB, the UvrA molecules dissociate. The polypeptide is UvrABC system protein A (Streptococcus pyogenes serotype M18 (strain MGAS8232)).